A 372-amino-acid polypeptide reads, in one-letter code: Zinc finger protein dpff-1 (372 aa).

Residues 108–204 (VGPTTESVSD…SRSIVKETKY (97 aa)) are disordered. Residues 109–131 (GPTTESVSDSSNDSTTIRPSRQT) show a composition bias toward polar residues. Basic and acidic residues predominate over residues 132 to 141 (QIKEEYRDDY). Acidic residues predominate over residues 142–158 (VLDDELSPDEFGSDEDD). A compositionally biased stretch (polar residues) spans 184–196 (TTRSSVSRLTPSR). Residues 212-235 (YPCDKCSAKYKSLAGLSYHQSYLH) form a C2H2-type zinc finger. 2 PHD-type zinc fingers span residues 256-314 (SCDF…CKSC) and 316-361 (ICGT…CQVE).

The protein belongs to the requiem/DPF family.

Its subcellular location is the nucleus. The protein resides in the cytoplasm. Probable transcription factor, involved in meiosis and stress protection. This Caenorhabditis elegans protein is Zinc finger protein dpff-1.